A 521-amino-acid polypeptide reads, in one-letter code: Importin subunit alpha-3 (521 aa).

Position 2 is an N-acetylalanine (alanine 2). The 57-residue stretch at 2–58 (ADNEKLDNQRLKNFKNKGRDLETMRRQRNEVVVELRKNKRDEHLLKRRNVPQEDICE) folds into the IBB domain. A Nuclear localization signal motif is present at residues 43-52 (EHLLKRRNVP). Serine 60 carries the post-translational modification Phosphoserine. The ARM 1; truncated repeat unit spans residues 66–106 (YRVQNTSLEAIVQNASSDNQGIQLSAVQAARKLLSSDRNPP). 8 ARM repeats span residues 107 to 149 (IDDL…TSEQ), 150 to 194 (TQAV…CRDY), 195 to 233 (VISL…HKDP), 234 to 278 (PPPM…EQIQ), 279 to 318 (MVID…TDEQ), 319 to 360 (TQVV…NQQQ), 361 to 400 (VQAV…ISGR), and 401 to 443 (KDQV…KMAE). An NLS binding site (major) region spans residues 137 to 229 (WALTNIASGT…VTWVMVNLCR (93 aa)). The tract at residues 306–394 (RAVGNIVTGT…QKEAAWAISN (89 aa)) is NLS binding site (minor). Residues 447–485 (ETIANLIEECGGLEKIEQLQNHENEDIYKLAYEIIDQFF) form an ARM 10; atypical repeat.

This sequence belongs to the importin alpha family. As to quaternary structure, forms a complex with importin subunit beta-1 (KPNB1). Interacts with SNAI1. Interacts with TALDO1 isoform 1. Interacts with CYB1. As to expression, detected more or less in all tissues examined (Ehrlich ascites tumor cells, testis, kidney, spleen, liver, heart, lung, thymus, skeletal muscle, cerebellum and brain (without cerebellum)). Multiple-sized transcripts were highly expressed, especially in testis.

It is found in the cytoplasm. Its subcellular location is the nucleus. Functions in nuclear protein import as an adapter protein for nuclear receptor KPNB1. Binds specifically and directly to substrates containing either a simple or bipartite NLS motif. Docking of the importin/substrate complex to the nuclear pore complex (NPC) is mediated by KPNB1 through binding to nucleoporin FxFG repeats and the complex is subsequently translocated through the pore by an energy requiring, Ran-dependent mechanism. At the nucleoplasmic side of the NPC, Ran binds to importin-beta and the three components separate and importin-alpha and -beta are re-exported from the nucleus to the cytoplasm where GTP hydrolysis releases Ran from importin. The directionality of nuclear import is thought to be conferred by an asymmetric distribution of the GTP- and GDP-bound forms of Ran between the cytoplasm and nucleus. Mediates nuclear import of AARS1, MRTFA and RANBP3. In Mus musculus (Mouse), this protein is Importin subunit alpha-3 (Kpna4).